A 238-amino-acid polypeptide reads, in one-letter code: 1-(5-phosphoribosyl)-5-[(5-phosphoribosylamino)methylideneamino] imidazole-4-carboxamide isomerase (238 aa).

The active-site Proton acceptor is the Asp-8. The active-site Proton donor is Asp-129.

Belongs to the HisA/HisF family.

The protein localises to the cytoplasm. The catalysed reaction is 1-(5-phospho-beta-D-ribosyl)-5-[(5-phospho-beta-D-ribosylamino)methylideneamino]imidazole-4-carboxamide = 5-[(5-phospho-1-deoxy-D-ribulos-1-ylimino)methylamino]-1-(5-phospho-beta-D-ribosyl)imidazole-4-carboxamide. Its pathway is amino-acid biosynthesis; L-histidine biosynthesis; L-histidine from 5-phospho-alpha-D-ribose 1-diphosphate: step 4/9. This is 1-(5-phosphoribosyl)-5-[(5-phosphoribosylamino)methylideneamino] imidazole-4-carboxamide isomerase from Jannaschia sp. (strain CCS1).